The primary structure comprises 390 residues: Mannitol-1-phosphate 5-dehydrogenase (390 aa).

3–14 (ALHFGAGNIGRG) is an NAD(+) binding site.

Belongs to the mannitol dehydrogenase family.

It catalyses the reaction D-mannitol 1-phosphate + NAD(+) = beta-D-fructose 6-phosphate + NADH + H(+). The sequence is that of Mannitol-1-phosphate 5-dehydrogenase from Buchnera aphidicola subsp. Baizongia pistaciae (strain Bp).